Here is a 231-residue protein sequence, read N- to C-terminus: 7-cyano-7-deazaguanine synthase (231 aa).

ATP is bound at residue 8–18 (FSGGQDSTTCL). Positions 188, 197, 200, and 203 each coordinate Zn(2+).

This sequence belongs to the QueC family. The cofactor is Zn(2+).

The catalysed reaction is 7-carboxy-7-deazaguanine + NH4(+) + ATP = 7-cyano-7-deazaguanine + ADP + phosphate + H2O + H(+). It functions in the pathway purine metabolism; 7-cyano-7-deazaguanine biosynthesis. In terms of biological role, catalyzes the ATP-dependent conversion of 7-carboxy-7-deazaguanine (CDG) to 7-cyano-7-deazaguanine (preQ(0)). The protein is 7-cyano-7-deazaguanine synthase of Salmonella gallinarum (strain 287/91 / NCTC 13346).